Here is a 696-residue protein sequence, read N- to C-terminus: DNA topoisomerase 6 subunit B (696 aa).

Residues 1-36 form a disordered region; that stretch reads MDDDAGDGAASGGTKRKVTAASSSAAAKGKAAGKGK. The segment covering 20-36 has biased composition (low complexity); the sequence is AASSSAAAKGKAAGKGK. ATP is bound by residues asparagine 88, aspartate 187, 208-209, 217-224, and lysine 543; these read TK and GKFGLGAK.

This sequence belongs to the TOP6B family. Homodimer. Heterotetramer of two TOP6A and two TOP6B subunits. Interacts with SPO11-2 and TOP6A3. In terms of tissue distribution, highly expressed in flowers before pollination. Expressed in roots and shoots.

It is found in the nucleus. It catalyses the reaction ATP-dependent breakage, passage and rejoining of double-stranded DNA.. Its function is as follows. Component of the DNA topoisomerase VI involved in chromatin organization and progression of endoreduplication cycles. Relaxes both positive and negative superturns and exhibits a strong decatenase activity. The B subunit binds ATP. May be involved in cell proliferation and stress tolerance. The polypeptide is DNA topoisomerase 6 subunit B (Oryza sativa subsp. indica (Rice)).